A 140-amino-acid chain; its full sequence is Alpha-lactalbumin (140 aa).

The first 19 residues, Met1 to Ala19, serve as a signal peptide directing secretion. Residues Ile20–Cys140 enclose the C-type lysozyme domain. 4 disulfide bridges follow: Cys25-Cys140, Cys47-Cys131, Cys80-Cys96, and Cys92-Cys110. A glycan (N-linked (GlcNAc...) asparagine) is linked at Asn63. Residues Lys98, Asp101, Asp103, Asp106, and Asp107 each coordinate Ca(2+).

This sequence belongs to the glycosyl hydrolase 22 family. As to quaternary structure, lactose synthase (LS) is a heterodimer of a catalytic component, beta1,4-galactosyltransferase (beta4Gal-T1) and a regulatory component, alpha-lactalbumin (LA). As to expression, mammary gland specific. Secreted in milk.

Its subcellular location is the secreted. In terms of biological role, regulatory subunit of lactose synthase, changes the substrate specificity of galactosyltransferase in the mammary gland making glucose a good acceptor substrate for this enzyme. This enables LS to synthesize lactose, the major carbohydrate component of milk. In other tissues, galactosyltransferase transfers galactose onto the N-acetylglucosamine of the oligosaccharide chains in glycoproteins. The polypeptide is Alpha-lactalbumin (LALBA) (Notamacropus eugenii (Tammar wallaby)).